We begin with the raw amino-acid sequence, 408 residues long: LL-diaminopimelate aminotransferase (408 aa).

The substrate site is built by Y15 and G42. Pyridoxal 5'-phosphate-binding positions include Y72, 108–109 (SK), Y132, N187, Y218, and 246–248 (SFS). Substrate contacts are provided by K109, Y132, and N187. K249 bears the N6-(pyridoxal phosphate)lysine mark. The pyridoxal 5'-phosphate site is built by R257 and N292. The substrate site is built by N292 and R388.

The protein belongs to the class-I pyridoxal-phosphate-dependent aminotransferase family. LL-diaminopimelate aminotransferase subfamily. As to quaternary structure, homodimer. It depends on pyridoxal 5'-phosphate as a cofactor.

It catalyses the reaction (2S,6S)-2,6-diaminopimelate + 2-oxoglutarate = (S)-2,3,4,5-tetrahydrodipicolinate + L-glutamate + H2O + H(+). It functions in the pathway amino-acid biosynthesis; L-lysine biosynthesis via DAP pathway; LL-2,6-diaminopimelate from (S)-tetrahydrodipicolinate (aminotransferase route): step 1/1. Functionally, involved in the synthesis of meso-diaminopimelate (m-DAP or DL-DAP), required for both lysine and peptidoglycan biosynthesis. Catalyzes the direct conversion of tetrahydrodipicolinate to LL-diaminopimelate. The polypeptide is LL-diaminopimelate aminotransferase (Prochlorococcus marinus (strain MIT 9515)).